Reading from the N-terminus, the 639-residue chain is Protein argonaute (639 aa).

The segment at 1–100 (MYLNLYKIDI…YIKKLFLDND (100 aa)) is N-terminal domain. The segment at 101–153 (FYFKKGNNFISNSEVFSLDSNENVNAHLTYKIKIHNISNEYYLSILPKFTFLS) is linker L1. The tract at residues 154–209 (KEPALESAIKSGYLYNIKSGKSFPYISGLDGILKIDIGNNQIVEVAYPENYLFNFT) is PAZ domain. The segment at 210–292 (TRDAEKYGFS…KYSFYKNEQP (83 aa)) is linker L2. Positions 293–424 (LKAIFFFSSK…YVYKMGNFIP (132 aa)) are mid domain. Residues 425–639 (ECKPFILKKM…DYEWKLYIPY (215 aa)) form a PIWI domain region. Active-site residues include Asp-446, Glu-482, Asp-516, and Asn-624. Asp-446 is a Mn(2+) binding site. 2 residues coordinate Mn(2+): Asp-516 and Asn-624.

The protein belongs to the argonaute family. Long pAgo subfamily. Requires Mn(2+) as cofactor.

It localises to the cytoplasm. In terms of biological role, an RNA-guided ssDNA endonuclease that may play a role in defense against invading mobile genetic elements. Uses short 5'-OH-ssRNA sequences as guides (gRNA) to bind complementary target DNA (tDNA) or target RNA resulting in target cleavage. The cleavage site is 10 nucleotides (nt) downstream of the target residue base-paired with the 5'-end of the gRNA. Reaction rates are fastest on 5'-OH-gRNA:tDNA followed by 5'-OH-gRNA:target RNA. gRNA between 17-21 nt supports equivalent rates of cleavage, has no preferred 5'-nt. Has weak activity on tDNA with 5'-phospho-gRNA, yielding products 1-2 nt longer. Unlike other characterized prokaryotic Ago proteins symmetric mismatches centered around the cleavage site reduce cleavage efficiency. The chain is Protein argonaute from Marinitoga piezophila (strain DSM 14283 / JCM 11233 / KA3).